Consider the following 161-residue polypeptide: Putative pre-16S rRNA nuclease (161 aa).

Belongs to the YqgF nuclease family.

The protein resides in the cytoplasm. Could be a nuclease involved in processing of the 5'-end of pre-16S rRNA. In Rhodospirillum rubrum (strain ATCC 11170 / ATH 1.1.1 / DSM 467 / LMG 4362 / NCIMB 8255 / S1), this protein is Putative pre-16S rRNA nuclease.